The sequence spans 146 residues: Hemoglobin subunit beta (146 aa).

Valine 1 bears the N-acetylvaline mark. The Globin domain occupies 2–146 (ELTAEEKAAV…VANALAHKYH (145 aa)). The residue at position 44 (serine 44) is a Phosphoserine. Position 59 is an N6-acetyllysine (lysine 59). Residue histidine 63 participates in heme b binding. An N6-acetyllysine modification is found at lysine 82. Heme b is bound at residue histidine 92. Position 93 is an S-nitrosocysteine (cysteine 93). N6-acetyllysine is present on lysine 144.

Belongs to the globin family. As to quaternary structure, heterotetramer of two alpha chains and two beta chains. In terms of tissue distribution, red blood cells.

Functionally, involved in oxygen transport from the lung to the various peripheral tissues. This chain is Hemoglobin subunit beta (HBB), found in Ceratotherium simum (White rhinoceros).